Here is a 330-residue protein sequence, read N- to C-terminus: Aspartate--ammonia ligase (330 aa).

The protein belongs to the class-II aminoacyl-tRNA synthetase family. AsnA subfamily.

The protein resides in the cytoplasm. The catalysed reaction is L-aspartate + NH4(+) + ATP = L-asparagine + AMP + diphosphate + H(+). Its pathway is amino-acid biosynthesis; L-asparagine biosynthesis; L-asparagine from L-aspartate (ammonia route): step 1/1. The polypeptide is Aspartate--ammonia ligase (Actinobacillus pleuropneumoniae serotype 7 (strain AP76)).